A 675-amino-acid polypeptide reads, in one-letter code: Protein distal antenna (675 aa).

Positions 5 to 56 (TKGKRPLRHLTATDKIDAIQRIHDGESKASVARDIGVPESTLRGWCKNEEKL) constitute an HTH psq-type domain. Positions 32 to 52 (KASVARDIGVPESTLRGWCKN) form a DNA-binding region, H-T-H motif. 5 disordered regions span residues 239 to 269 (QSLRNARPKANTSQSPRTSNLSDVNGDKNPS), 337 to 393 (LYSS…PEDT), 458 to 534 (LNII…SKCN), 546 to 596 (FQNP…AHKS), and 655 to 675 (ERQQQNAVSSGEERTRVRRRK). Residues 339–368 (SSMPRPSSPQQSSSPPQQHQQVQHHPSTQT) are compositionally biased toward low complexity. Positions 369–384 (PTPPIVSTPQPTPPSS) are enriched in pro residues. Over residues 469–478 (VKSEPEDLSN) the composition is skewed to basic and acidic residues. Positions 479–493 (HNHSSSNAAAVAAPA) are enriched in low complexity. The segment covering 499-508 (FNPSPSTSAK) has biased composition (polar residues). The segment covering 513 to 528 (QEDDEEQAGPADDESP) has biased composition (acidic residues). The span at 559–579 (NLSIRSNNSPRRRSVSPAVSN) shows a compositional bias: low complexity.

As to quaternary structure, homomers. Interacts with itself, danr, ey and dac to form a complex (or complexes) containing the RD factors.

It is found in the nucleus. Functionally, probable transcription factor with a role in the retinal determination (RD) network. Contributes to differentiation of antenna-specific characteristics. The polypeptide is Protein distal antenna (Aedes aegypti (Yellowfever mosquito)).